The following is a 395-amino-acid chain: 8-amino-7-oxononanoate synthase (395 aa).

Substrate is bound at residue Arg-24. Position 111–112 (111–112) interacts with pyridoxal 5'-phosphate; sequence GF. His-136 contacts substrate. Pyridoxal 5'-phosphate is bound by residues Ser-184, 209–212, and 240–243; these read DDAH and TLSK. Residue Lys-243 is modified to N6-(pyridoxal phosphate)lysine. Thr-357 is a binding site for substrate.

This sequence belongs to the class-II pyridoxal-phosphate-dependent aminotransferase family. BioF subfamily. Homodimer. Pyridoxal 5'-phosphate is required as a cofactor.

It catalyses the reaction 6-carboxyhexanoyl-[ACP] + L-alanine + H(+) = (8S)-8-amino-7-oxononanoate + holo-[ACP] + CO2. Its pathway is cofactor biosynthesis; biotin biosynthesis. In terms of biological role, catalyzes the decarboxylative condensation of pimeloyl-[acyl-carrier protein] and L-alanine to produce 8-amino-7-oxononanoate (AON), [acyl-carrier protein], and carbon dioxide. This chain is 8-amino-7-oxononanoate synthase, found in Alkaliphilus oremlandii (strain OhILAs) (Clostridium oremlandii (strain OhILAs)).